A 117-amino-acid chain; its full sequence is Large ribosomal subunit protein bL17 (117 aa).

It belongs to the bacterial ribosomal protein bL17 family. As to quaternary structure, part of the 50S ribosomal subunit. Contacts protein L32.

This is Large ribosomal subunit protein bL17 from Dehalococcoides mccartyi (strain ATCC BAA-2100 / JCM 16839 / KCTC 5957 / BAV1).